The sequence spans 200 residues: Recombination protein RecR (200 aa).

A C4-type zinc finger spans residues 59–74; that stretch reads CEICGNIDTRSPCTVC. Residues 82–177 form the Toprim domain; that stretch reads SIIVVVADVA…KVTRLAHGVP (96 aa).

It belongs to the RecR family.

May play a role in DNA repair. It seems to be involved in an RecBC-independent recombinational process of DNA repair. It may act with RecF and RecO. The polypeptide is Recombination protein RecR (Nitrobacter hamburgensis (strain DSM 10229 / NCIMB 13809 / X14)).